The sequence spans 793 residues: Translocase of chloroplast 90, chloroplastic (793 aa).

A disordered region spans residues 22–59 (LGSDPFFRDPHQEQDNHSQAPAAPQPVTLSEPPCSTSS). Basic and acidic residues predominate over residues 27–37 (FFRDPHQEQDN). The stretch at 130 to 157 (LIRAEESELKNVKLRQDRAKALAREQES) forms a coiled coil. The AIG1-type G domain maps to 164–394 (DFSLRILVLG…FRDSIGLGQP (231 aa)). Residues 173–180 (GKTGVGKS) are G1. GTP contacts are provided by residues 176 to 181 (GVGKSA) and 195 to 200 (DAFRPG). Ser-180 is a binding site for Mg(2+). A homodimerization region spans residues 195 to 198 (DAFR). Residues 199-203 (PGTDR) form a G2 region. Residues 220–223 (DTPG) are G3. A homodimerization region spans residues 259–264 (RLDMID). A helical membrane pass occupies residues 279–297 (IFGAAIWLNTILVMTHSAA). Residues 293 to 296 (THSA) are G4. GTP-binding positions include His-294 and 341–342 (EN). The tract at residues 341–343 (ENH) is G5. 2 coiled-coil regions span residues 410–442 (LRRR…YDQL) and 477–503 (KKQL…DTEQ).

Belongs to the TRAFAC class TrmE-Era-EngA-EngB-Septin-like GTPase superfamily. AIG1/Toc34/Toc159-like paraseptin GTPase family. TOC159 subfamily. Homodimer. Part of the TOC core complex that includes 1 protein for the specific recognition of transit peptides surrounded by a ring composed of four proteins forming translocation channels, and four to five GTP-binding proteins providing energy. This core complex can interact with components of the TIC complex to form a larger import complex. Chloroplastic protein precursor such as prSS (precursor of the RuBisCO small subunit) interacts with these complexes. The TOC complex contains a specific subset of polar lipids such as digalactosyldiacylglyceride (DGDG), phosphatidylcholine (PC) and phosphatidylglycerol (PG). Interacts with TOC33 and TOC75. Mg(2+) is required as a cofactor. As to expression, expressed in seedlings, leaves, flowers, and roots.

The protein localises to the plastid. It is found in the chloroplast outer membrane. It localises to the cytoplasm. In terms of biological role, GTPase involved in protein precursor import into chloroplasts. Seems to recognize chloroplast-destined precursor proteins and regulate their presentation to the translocation channel through GTP hydrolysis. Probably specialized in the import of nuclear encoded photosynthetic preproteins from the cytoplasm to the chloroplast. The protein is Translocase of chloroplast 90, chloroplastic (TOC90) of Arabidopsis thaliana (Mouse-ear cress).